A 375-amino-acid chain; its full sequence is Alpha-2,8-sialyltransferase 8B (375 aa).

Topologically, residues 1–6 (MQLQFR) are cytoplasmic. A helical; Signal-anchor for type II membrane protein transmembrane segment spans residues 7–23 (SWMLAALTLLVVFLIFA). Over 24-375 (DISEIEEEIG…LTVGQCDGAT (352 aa)) the chain is Lumenal. N-linked (GlcNAc...) asparagine glycans are attached at residues asparagine 60, asparagine 72, asparagine 89, and asparagine 134. Disulfide bonds link cysteine 157–cysteine 307 and cysteine 171–cysteine 371. CMP-N-acetyl-beta-neuraminate contacts are provided by asparagine 162 and asparagine 185. N-linked (GlcNAc...) asparagine glycans are attached at residues asparagine 219 and asparagine 234. Threonine 294, threonine 295, glycine 296, tryptophan 316, tyrosine 329, and histidine 330 together coordinate CMP-N-acetyl-beta-neuraminate. The active-site Proton donor/acceptor is the histidine 346.

The protein belongs to the glycosyltransferase 29 family. Post-translationally, autopolysialylated. Autopolysialylation is not a prerequisite for the polysialylation acitity, but enhances the polysialylation acitity. As to expression, highly expressed in fetal brain, kidney and heart and to a much lesser extent in adult heart and thymus.

It localises to the golgi apparatus membrane. The protein localises to the secreted. Its subcellular location is the cell membrane. It catalyses the reaction [N-acetyl-alpha-D-neuraminosyl-(2-&gt;8)](n) + CMP-N-acetyl-beta-neuraminate = [N-acetyl-alpha-D-neuraminosyl-(2-&gt;8)](n+1) + CMP + H(+). It functions in the pathway protein modification; protein glycosylation. Its function is as follows. Catalyzes the transfer of a sialic acid from a CMP-linked sialic acid donor onto a terminal alpha-2,3-, alpha-2,6-, or alpha-2,8-linked sialic acid of an N-linked glycan acceptor through alpha-2,8-linkages. Therefore, participates in polysialic acid synthesis on various sialylated N-acetyllactosaminyl oligosaccharides (alpha-2,3-, alpha-2,6-, or alpha-2,8-linked sialic acid), including NCAM1, NCAM1 N-glycans, FETUB N-glycans, and to a lesser extent sialylparagloboside (SPG) and AHSG, which does not require the initial addition of an alpha 2,8-sialic acid. However, does not exhibit sialic acid-polymerase activity. Catalyzes polysialic acid synthesis in the hippocampal on NCAM1 and supports neurite outgrowth. ST8SIA2-mediated polysialylation influences on oligodendrocyte differentiation and may promote the integrity of myelin and axons. The polypeptide is Alpha-2,8-sialyltransferase 8B (Homo sapiens (Human)).